The following is a 1730-amino-acid chain: SH3 and multiple ankyrin repeat domains protein 3 (1730 aa).

The segment at 1 to 75 is intramolecular interaction with the ANK repeats; sequence MDGPGASAVV…KFLDEERLLQ (75 aa). A Phosphotyrosine modification is found at tyrosine 122. ANK repeat units lie at residues 148-178, 182-211, 215-245, 249-278, 282-311, and 315-345; these read SGECPLSLAAQLDNATDLLKVLRNGGAHLDF, DGLTAVHCATRQRNAGALTTLLDLGASPDY, RGLTPLYHSALGGGDALCCELLLHDHAQLGT, NGWQEIHQACRFGHVQHLEHLLFYGANMGA, SGNTALHICALYNQESCARVLLFRGANKDV, and NSQTAFQVAIIAGNFELAEVIKTHKDSDVVP. A disordered region spans residues 354–466; sequence KRRRLAGPSG…PPPRGPKRKL (113 aa). A phosphoserine mark is found at serine 373, serine 375, serine 387, and serine 394. Residues 404-415 are compositionally biased toward basic and acidic residues; that stretch reads LQEEKDRDRDGE. The span at 444–460 shows a compositional bias: pro residues; it reads APGPGPASPAPPAPPPR. The SH3 domain occupies 470–529; sequence VPGRKFIAVKAHSPQGEGEIPLHRGEAVKVLSIGEGGFWEGTVKGRTGWFPADCVEEVQM. The residue at position 482 (serine 482) is a Phosphoserine. A Phosphotyrosine modification is found at tyrosine 555. Residues 570–664 form the PDZ domain; sequence VAILQKRDHE…RLVMKVVSVT (95 aa). The segment at 664–688 is disordered; that stretch reads TRKPEEDGARRRAPPPPKRAPSTTL. Residues 677–684 are required for interaction with ABI1; that stretch reads PPPPKRAP. A phosphoserine mark is found at serine 694, serine 781, serine 790, and serine 801. Disordered regions lie at residues 760-1460 and 1475-1524; these read QGLP…AAGP and GDPV…SLLD. The span at 812–844 shows a compositional bias: pro residues; that stretch reads IPPPPQTAPPPPPAPYYFDSGPPPTFSPPPPPG. Residues 857–869 show a composition bias toward low complexity; sequence GLEARLGAGAAGL. A phosphoserine mark is found at serine 890 and serine 897. Threonine 912 carries the phosphothreonine modification. Tyrosine 930 bears the Phosphotyrosine mark. At arginine 965 the chain carries Asymmetric dimethylarginine. Position 995 is a phosphoserine (serine 995). Positions 1016 to 1026 are enriched in basic and acidic residues; the sequence is VKERRLEERRR. The segment covering 1078-1092 has biased composition (low complexity); the sequence is LKPLVGGPSLGPSGS. Residues 1122–1131 show a composition bias toward polar residues; that stretch reads SQTPSRSPTP. Residue threonine 1130 is modified to Phosphothreonine. Phosphoserine occurs at positions 1134, 1159, 1163, and 1166. Over residues 1174–1194 the composition is skewed to basic and acidic residues; sequence ARREAEKPPREERKSPEDKKS. Threonine 1234 bears the Phosphothreonine mark. A compositionally biased stretch (low complexity) spans 1235–1250; that stretch reads PELAPAPMQAAAVAEP. Composition is skewed to pro residues over residues 1251–1261 and 1321–1333; these read MPSPRAQPPGS and TPPPGPGPLPTTV. A Phosphoserine modification is found at serine 1253. The span at 1360–1370 shows a compositional bias: basic and acidic residues; that stretch reads ADTRSSSDPHL. Positions 1371 to 1392 are enriched in low complexity; sequence ETTSTISTVSSMSTLSSESGEL. The SH3-binding motif lies at 1410–1416; that stretch reads PPVPPKP. At serine 1420 the chain carries Phosphoserine. Residues 1494–1514 are a coiled coil; it reads ISELSSRLQQLNKDTRSLGEE. Residues 1495-1505 are compositionally biased toward polar residues; it reads SELSSRLQQLN. 4 positions are modified to phosphoserine: serine 1510, serine 1521, serine 1529, and serine 1539. Disordered stretches follow at residues 1546 to 1584 and 1627 to 1663; these read ISAQRSPGGPGGGASYSVRPSGRYPVARRAPSPVKPASL and VRSVSARSRSPSPSPLPSPSPGSGPSAGPRRPFQQKP. The segment covering 1627–1637 has biased composition (low complexity); it reads VRSVSARSRSP. Residues serine 1634, serine 1636, and serine 1638 each carry the phosphoserine modification. Residues 1638 to 1648 are compositionally biased toward pro residues; that stretch reads SPSPLPSPSPG. The span at 1649-1658 shows a compositional bias: low complexity; that stretch reads SGPSAGPRRP. The SAM domain occupies 1667–1730; it reads WSKFDVGDWL…ERALRQLDGS (64 aa).

It belongs to the SHANK family. In terms of assembly, may homomultimerize via its SAM domain. Interacts with BAIAP2, DBNL and SLC17A7/VGLUT1. Interacts with DLGAP1/GKAP, GRM1/MGLUR1, GRM5/MGLUR5 and LZTS3 C-termini via its PDZ domain. Interacts with ABI1, HOMER1, HOMER2, HOMER3 and CTTN/cortactin SH3 domain. Is part of a complex with DLG4/PSD-95 and DLGAP1/GKAP. Interacts (via PDZ domain) with the GRIA1 subunit of the AMPA receptor (via PDZ-binding motif). Interacts with WASF1 and CYFIP2; the interactions mediate the association of SHANK3 with the WAVE1 complex. Interacts with ARPC2; the interaction probably mediates the association of SHANK3 with the Arp2/3 complex. Interacts (via ANK repeats) with SHARPIN and SPTAN1. Interacts (via PDZ domain) with ARHGAP44 (probably via PDZ-binding motif); the interaction takes place in dendritic spines and promotes GRIA1 exocytosis. Interacts with CAMK2A. Interacts with DIP2A. Interacts with ADGRL3. In terms of tissue distribution, in brain, highly expressed in striatum, thalamus, hippocampus and granule cells of the cerebellum.

The protein resides in the cytoplasm. It is found in the synapse. Its subcellular location is the postsynaptic density. The protein localises to the cell projection. It localises to the dendritic spine. Major scaffold postsynaptic density protein which interacts with multiple proteins and complexes to orchestrate the dendritic spine and synapse formation, maturation and maintenance. Interconnects receptors of the postsynaptic membrane including NMDA-type and metabotropic glutamate receptors via complexes with GKAP/PSD-95 and HOMER, respectively, and the actin-based cytoskeleton. Plays a role in the structural and functional organization of the dendritic spine and synaptic junction through the interaction with Arp2/3 and WAVE1 complex as well as the promotion of the F-actin clusters. By way of this control of actin dynamics, participates in the regulation of developing neurons growth cone motility and the NMDA receptor-signaling. Also modulates GRIA1 exocytosis and GRM5/MGLUR5 expression and signaling to control the AMPA and metabotropic glutamate receptor-mediated synaptic transmission and plasticity. May be required at an early stage of synapse formation and be inhibited by IGF1 to promote synapse maturation. This is SH3 and multiple ankyrin repeat domains protein 3 (Shank3) from Mus musculus (Mouse).